Consider the following 268-residue polypeptide: MNITYVPEIHRTDKQHTENLRHWRKILGIAPFVSIVFPAIMCLIFTKDRFEKSPFLKFIILLLPFSYSAVQYALLRTNWKSDNKPEGILQSILYHTLSLLLLAFAAISILSITAFTLDKWESSESIFFSIVLPSFFIPPTYLLSTSCRLVPGQIGFTDTGINVLIDIPILLCPLVSLVLIIALEETECCYYSAIISSVFILIRLLREKYSPSEKSTLPTAPWRVAILVLILTLAALIYAFMMWGSMDILNDHFGLLNKLKRVFPFTNA.

Belongs to the UPF0328 family.

The chain is UPF0328 protein ECU09_2030 from Encephalitozoon cuniculi (strain GB-M1) (Microsporidian parasite).